Here is a 209-residue protein sequence, read N- to C-terminus: Small ribosomal subunit protein uS3 (209 aa).

In terms of domain architecture, KH type-2 spans 38 to 107 (IRNFIKKNYN…KFGIDIIELK (70 aa)).

It belongs to the universal ribosomal protein uS3 family. In terms of assembly, part of the 30S ribosomal subunit. Forms a tight complex with proteins S10 and S14.

Binds the lower part of the 30S subunit head. Binds mRNA in the 70S ribosome, positioning it for translation. The sequence is that of Small ribosomal subunit protein uS3 from Fervidobacterium nodosum (strain ATCC 35602 / DSM 5306 / Rt17-B1).